We begin with the raw amino-acid sequence, 177 residues long: Alpha-crystallin A chain (177 aa).

Met1 bears the N-acetylmethionine mark. The sHSP domain occupies 52 to 162; sequence VFRNFLDSGI…NWQDRPIPVS (111 aa). Positions 100 and 102 each coordinate Zn(2+). An intrachain disulfide couples Cys131 to Cys142. Residues 146–177 are disordered; sequence TRPGDDSNWQDRPIPVSREEKQGTQPEIRADP. A glycan (O-linked (GlcNAc) serine) is linked at Ser162. Over residues 162-177 the composition is skewed to basic and acidic residues; it reads SREEKQGTQPEIRADP.

This sequence belongs to the small heat shock protein (HSP20) family. Heteropolymer composed of three CRYAA and one CRYAB subunits. Inter-subunit bridging via zinc ions enhances stability, which is crucial as there is no protein turn over in the lens. Can also form homodimers and homotetramers (dimers of dimers) which serve as the building blocks of homooligomers.

Its subcellular location is the cytoplasm. It localises to the nucleus. Contributes to the transparency and refractive index of the lens. May act as a chaperone, preventing aggregation of various proteins under a wide range of stress conditions. The sequence is that of Alpha-crystallin A chain (cryaa) from Squalus acanthias (Spiny dogfish).